The sequence spans 270 residues: MLFHSLIMGLVEGITEFLPISSTGHLILTGDLLGFLDKEKRDVYEIFIQLGAMLAVVWEYRRKIGHTVAGAVRPGGERNLLLGIVIAFIPAAVAGLLFSKQIKAVLFNPVCVAIAFIVGGLIILWAEKREHKVAVETVDDLSLKDALKVGLCQCLALIPGTSRSGATIIGGLFLGLSRKAATEFSFFLGIPTLGAASLYSLIKHRDALSADDIGVFAVGFIASFVFAFLAIRALLRFISTHSFAVFAWYRIAFGLIVLGTWWSGLVNWSA.

Helical transmembrane passes span 79–99, 105–125, 155–175, 182–202, 215–235, and 242–262; these read NLLL…LLFS, VLFN…IILW, LALI…LFLG, TEFS…YSLI, VFAV…RALL, and SFAV…GTWW.

It belongs to the UppP family.

It localises to the cell inner membrane. It carries out the reaction di-trans,octa-cis-undecaprenyl diphosphate + H2O = di-trans,octa-cis-undecaprenyl phosphate + phosphate + H(+). Functionally, catalyzes the dephosphorylation of undecaprenyl diphosphate (UPP). Confers resistance to bacitracin. The polypeptide is Undecaprenyl-diphosphatase 1 (Chromobacterium violaceum (strain ATCC 12472 / DSM 30191 / JCM 1249 / CCUG 213 / NBRC 12614 / NCIMB 9131 / NCTC 9757 / MK)).